Consider the following 161-residue polypeptide: Carboxysome assembly protein CcmN (161 aa).

The segment at 111–140 (LLSAETPPTTATVSSSEPAGRSPQSSAIAH) is disordered. A compositionally biased stretch (polar residues) spans 116 to 137 (TPPTTATVSSSEPAGRSPQSSA). The Encapsulation peptide signature appears at 144-161 (VYGKEQFLRMRQSMFPDR).

It belongs to the CcmN family. In terms of assembly, interacts with CcmM via the N-terminus of CcmN. Interacts with CcmK2 via the 18 C-terminal residues.

It localises to the carboxysome. Required for carboxysome formation; the N-terminus interacts with CcmM which itself binds RuBisCO (ribulose bisphosphate carboxylase, rbcL-rbcS), while the C-terminal 18 residues interact with carboxysome shell protein CcmK2. Required for growth in normal air. Its function is as follows. Beta-carboxysome assembly initiates when soluble RuBisCO is condensed into a liquid matrix in a pre-carboxysome by the RbcS-like domains of probably both CcmM58 and CcmM35. CcmN interacts with the N-terminus of CcmM58, and then recruits the CcmK2 major shell protein via CcmN's encapsulation peptide. Shell formation requires CcmK proteins and CcmO. CcmL caps the otherwise elongated carboxysome. Once fully encapsulated carboxysomes are formed, they migrate within the cell probably via interactions with the cytoskeleton. The polypeptide is Carboxysome assembly protein CcmN (Synechococcus elongatus (strain ATCC 33912 / PCC 7942 / FACHB-805) (Anacystis nidulans R2)).